Here is a 328-residue protein sequence, read N- to C-terminus: Ribosomal protein L11 methyltransferase (328 aa).

S-adenosyl-L-methionine contacts are provided by Thr-153, Gly-174, Asp-196, and Asn-263.

It belongs to the methyltransferase superfamily. PrmA family.

Its subcellular location is the cytoplasm. The enzyme catalyses L-lysyl-[protein] + 3 S-adenosyl-L-methionine = N(6),N(6),N(6)-trimethyl-L-lysyl-[protein] + 3 S-adenosyl-L-homocysteine + 3 H(+). Functionally, methylates ribosomal protein L11. The protein is Ribosomal protein L11 methyltransferase of Chloroflexus aurantiacus (strain ATCC 29366 / DSM 635 / J-10-fl).